A 68-amino-acid polypeptide reads, in one-letter code: Conotoxin Cal12.1p1 (68 aa).

The propeptide occupies 1–23 (DLITNSYTRGKPRHVTSWRNLRT).

Contains 4 disulfide bonds. In terms of tissue distribution, expressed by the venom duct.

The protein resides in the secreted. This is Conotoxin Cal12.1p1 from Californiconus californicus (California cone).